Consider the following 382-residue polypeptide: Glutamine synthetase cytosolic isozyme (382 aa).

Positions 36-118 constitute a GS beta-grasp domain; sequence GKICAEYVWI…VMCDCYEPPK (83 aa). Residues 135 to 382 enclose the GS catalytic domain; that stretch reads TRFACAEVME…RLIVETTILL (248 aa).

This sequence belongs to the glutamine synthetase family. Homooctamer.

It is found in the cytoplasm. It carries out the reaction L-glutamate + NH4(+) + ATP = L-glutamine + ADP + phosphate + H(+). In Chlamydomonas reinhardtii (Chlamydomonas smithii), this protein is Glutamine synthetase cytosolic isozyme (GLN1).